Reading from the N-terminus, the 139-residue chain is MASLFRSYLPAIWLLLSQLLRESLAAELRGCGPRFGKHLLSYCPMPEKTFTTTPGGWLLESGRPKEMVSTSNNKDGQALGTTSEFIPNLSPELKKPLSEGQPSLKKIILSRKKRSGRHRFDPFCCEVICDDGTSVKLCT.

A signal peptide spans 1 to 25 (MASLFRSYLPAIWLLLSQLLRESLA). Cystine bridges form between C31/C125, C43/C138, and C124/C129. A propeptide spans 59–114 (LESGRPKEMVSTSNNKDGQALGTTSEFIPNLSPELKKPLSEGQPSLKKIILSRKKR) (c peptide).

Belongs to the insulin family. Expressed in placenta, uterus and in fetal perichondrium. Expression levels were increased in both early placentas and molar pregnancies and were reduced in choriocarcinoma cells.

It localises to the secreted. In terms of biological role, may play an important role in trophoblast development and in the regulation of bone formation. This Homo sapiens (Human) protein is Early placenta insulin-like peptide (INSL4).